The following is a 482-amino-acid chain: Major cardiolipin synthase ClsA (482 aa).

Transmembrane regions (helical) follow at residues 3 to 23 and 34 to 54; these read ISSILLSLFFILNILLAIIVI and WAWLLVLFFIPVLGFILYLLF. 2 PLD phosphodiesterase domains span residues 217–244 and 395–422; these read LNYRNHRKLVIIDGMTGYVGGFNVGDEY and DNGFIHAKTIVVDDEIASVGTANIDVRS. Catalysis depends on residues H222, K224, D229, H400, K402, and D407.

Belongs to the phospholipase D family. Cardiolipin synthase subfamily.

It is found in the cell membrane. It catalyses the reaction 2 a 1,2-diacyl-sn-glycero-3-phospho-(1'-sn-glycerol) = a cardiolipin + glycerol. In terms of biological role, catalyzes the reversible phosphatidyl group transfer from one phosphatidylglycerol molecule to another to form cardiolipin (CL) (diphosphatidylglycerol) and glycerol. The sequence is that of Major cardiolipin synthase ClsA (clsA) from Bacillus subtilis (strain 168).